A 55-amino-acid chain; its full sequence is Large ribosomal subunit protein bL33 (55 aa).

It belongs to the bacterial ribosomal protein bL33 family.

This is Large ribosomal subunit protein bL33 from Pseudarthrobacter chlorophenolicus (strain ATCC 700700 / DSM 12829 / CIP 107037 / JCM 12360 / KCTC 9906 / NCIMB 13794 / A6) (Arthrobacter chlorophenolicus).